A 1390-amino-acid chain; its full sequence is Hepatocyte growth factor receptor (1390 aa).

The N-terminal stretch at 1–24 is a signal peptide; the sequence is MKAPAVLAPGILVLLFTLVQRSNG. At 25-932 the chain is on the extracellular side; that stretch reads ECKEALAKSE…VIVQPDQNFT (908 aa). The 489-residue stretch at 27 to 515 folds into the Sema domain; it reads KEALAKSEMN…TGKKITKIPL (489 aa). N-linked (GlcNAc...) asparagine glycosylation is present at Asn-45. 4 disulfide bridges follow: Cys-95/Cys-101, Cys-98/Cys-160, Cys-133/Cys-141, and Cys-172/Cys-175. Asn-106 carries an N-linked (GlcNAc...) asparagine glycan. Asn-149 carries N-linked (GlcNAc...) asparagine glycosylation. Asn-202 carries an N-linked (GlcNAc...) asparagine glycan. Intrachain disulfides connect Cys-298–Cys-363 and Cys-385–Cys-397. N-linked (GlcNAc...) asparagine glycosylation is found at Asn-399 and Asn-405. 4 disulfide bridges follow: Cys-520-Cys-538, Cys-526-Cys-561, Cys-529-Cys-545, and Cys-541-Cys-551. IPT/TIG domains follow at residues 563-655, 657-739, and 742-836; these read PAIY…FSYV, PVIT…FSYR, and PIVY…LIYV. Thr-582 is a glycosylation site (O-linked (Man) threonine). N-linked (GlcNAc...) asparagine glycans are attached at residues Asn-607 and Asn-635. O-linked (Man) threonine glycosylation is found at Thr-676 and Thr-761. 3 N-linked (GlcNAc...) asparagine glycosylation sites follow: Asn-785, Asn-879, and Asn-930. A helical transmembrane segment spans residues 933 to 955; it reads GLIAGVVSISIALLLLLGFFLWL. The Cytoplasmic portion of the chain corresponds to 956–1390; sequence KKRKQIKDLG…TRPASFWETS (435 aa). The residue at position 966 (Ser-966) is a Phosphoserine. At Thr-977 the chain carries Phosphothreonine. Ser-990, Ser-997, and Ser-1000 each carry phosphoserine. A Phosphotyrosine modification is found at Tyr-1003. The Protein kinase domain occupies 1078 to 1345; sequence VHFNEVIGRG…RISAIFSTFI (268 aa). Residues 1084-1092 and Lys-1110 contribute to the ATP site; that span reads IGRGHFGCV. Catalysis depends on Asp-1204, which acts as the Proton acceptor. The tract at residues 1212–1390 is interaction with RANBP9; the sequence is LDEKFTVKVA…TRPASFWETS (179 aa). A Phosphotyrosine modification is found at Tyr-1230. 2 positions are modified to phosphotyrosine; by autocatalysis: Tyr-1234 and Tyr-1235. Position 1289 is a phosphothreonine (Thr-1289). Residues 1320 to 1359 are interaction with MUC20; sequence WHPKAEMRPSFSELVSRISAIFSTFIGEHYVHVNATYVNV. Phosphotyrosine; by autocatalysis occurs at positions 1349 and 1356. A Phosphotyrosine modification is found at Tyr-1365.

The protein belongs to the protein kinase superfamily. Tyr protein kinase family. As to quaternary structure, heterodimer made of an alpha chain (50 kDa) and a beta chain (145 kDa) which are disulfide linked. Binds PLXNB1. Interacts when phosphorylated with downstream effectors including STAT3, PIK3R1, SRC, PCLG1, GRB2 and GAB1. Interacts with SPSB1, SPSB2 and SPSB4. Interacts with INPP5D/SHIP1. When phosphorylated at Tyr-1356, interacts with INPPL1/SHIP2. Interacts with RANBP9 and RANBP10, as well as SPSB1, SPSB2, SPSB3 and SPSB4. SPSB1 binding occurs in the presence and in the absence of HGF, however HGF treatment has a positive effect on this interaction. Interacts with MUC20; prevents interaction with GRB2 and suppresses hepatocyte growth factor-induced cell proliferation. Interacts with GRB10. Interacts with PTPN1 and PTPN2. Interacts with HSP90AA1 and HSP90AB1; the interaction suppresses MET kinase activity. Interacts with tensin TNS3. Interacts (when phosphorylated) with tensin TNS4 (via SH2 domain); the interaction increases MET protein stability by inhibiting MET endocytosis and subsequent lysosomal degradation. Autophosphorylated in response to ligand binding on Tyr-1234 and Tyr-1235 in the kinase domain leading to further phosphorylation of Tyr-1349 and Tyr-1356 in the C-terminal multifunctional docking site. Dephosphorylated by PTPRJ at Tyr-1349 and Tyr-1365. Dephosphorylated by PTPN1 and PTPN2. In terms of processing, ubiquitinated. Ubiquitination by CBL regulates the receptor stability and activity through proteasomal degradation. Post-translationally, O-mannosylation of IPT/TIG domains by TMEM260 is required for protein maturation. O-mannosylated residues are composed of single mannose glycans that are not elongated or modified.

It is found in the membrane. The catalysed reaction is L-tyrosyl-[protein] + ATP = O-phospho-L-tyrosyl-[protein] + ADP + H(+). In its inactive state, the C-terminal tail interacts with the catalytic domain and inhibits the kinase activity. Upon ligand binding, the C-terminal tail is displaced and becomes phosphorylated, thus increasing the kinase activity. In terms of biological role, receptor tyrosine kinase that transduces signals from the extracellular matrix into the cytoplasm by binding to hepatocyte growth factor/HGF ligand. Regulates many physiological processes including proliferation, scattering, morphogenesis and survival. Ligand binding at the cell surface induces autophosphorylation of MET on its intracellular domain that provides docking sites for downstream signaling molecules. Following activation by ligand, interacts with the PI3-kinase subunit PIK3R1, PLCG1, SRC, GRB2, STAT3 or the adapter GAB1. Recruitment of these downstream effectors by MET leads to the activation of several signaling cascades including the RAS-ERK, PI3 kinase-AKT, or PLCgamma-PKC. The RAS-ERK activation is associated with the morphogenetic effects while PI3K/AKT coordinates prosurvival effects. During embryonic development, MET signaling plays a role in gastrulation, development and migration of muscles and neuronal precursors, angiogenesis and kidney formation. In adults, participates in wound healing as well as organ regeneration and tissue remodeling. Also promotes differentiation and proliferation of hematopoietic cells. This is Hepatocyte growth factor receptor (MET) from Pongo abelii (Sumatran orangutan).